The sequence spans 284 residues: Probable palmitoyltransferase ZDHHC24 (284 aa).

Residues 1 to 18 (MGESWAARGAEGAPARMP) lie on the Cytoplasmic side of the membrane. The chain crosses the membrane as a helical span at residues 19 to 39 (LVLTALWAAVVVLELAYVMVL). Over 40–52 (GPGPPPLGPLARA) the chain is Extracellular. The chain crosses the membrane as a helical span at residues 53 to 73 (LQLALAAYQLLNLLGNVVLFL). Residues 74–137 (RSDPSIRGVM…GCCVGFHNYR (64 aa)) lie on the Cytoplasmic side of the membrane. In terms of domain architecture, DHHC spans 94-144 (AYCYQCQSQVPPRSGHCSACRVCILRRDHHCRLLGCCVGFHNYRPFLCLLL). Cysteine 124 acts as the S-palmitoyl cysteine intermediate in catalysis. A helical transmembrane segment spans residues 138–158 (PFLCLLLHSAGVLLHISVLLG). At 159 to 166 (PALSALLQ) the chain is on the extracellular side. The chain crosses the membrane as a helical span at residues 167–187 (AHSALYTVALLLLPWLMLLTG). The Cytoplasmic portion of the chain corresponds to 188–195 (KVSLAQFA). Residues 196–216 (LAFVVDTCVAGALLCGAGLLF) traverse the membrane as a helical segment. Residues 217-284 (HGMLLLRGQT…TPGDVGLVTS (68 aa)) lie on the Extracellular side of the membrane.

The protein belongs to the DHHC palmitoyltransferase family.

The protein localises to the membrane. The catalysed reaction is L-cysteinyl-[protein] + hexadecanoyl-CoA = S-hexadecanoyl-L-cysteinyl-[protein] + CoA. Its function is as follows. Probable palmitoyltransferase that could catalyze the addition of palmitate onto various protein substrates. The chain is Probable palmitoyltransferase ZDHHC24 from Mus musculus (Mouse).